We begin with the raw amino-acid sequence, 554 residues long: Chaperonin GroEL (554 aa).

ATP-binding positions include 30–33 (TLGP), Lys-51, 87–91 (DGTTT), Gly-415, 479–481 (NAA), and Asp-495.

The protein belongs to the chaperonin (HSP60) family. As to quaternary structure, forms a cylinder of 14 subunits composed of two heptameric rings stacked back-to-back. Interacts with the co-chaperonin GroES.

It localises to the cytoplasm. The enzyme catalyses ATP + H2O + a folded polypeptide = ADP + phosphate + an unfolded polypeptide.. In terms of biological role, together with its co-chaperonin GroES, plays an essential role in assisting protein folding. The GroEL-GroES system forms a nano-cage that allows encapsulation of the non-native substrate proteins and provides a physical environment optimized to promote and accelerate protein folding. This Nitrosococcus oceani (strain ATCC 19707 / BCRC 17464 / JCM 30415 / NCIMB 11848 / C-107) protein is Chaperonin GroEL.